The sequence spans 1070 residues: DNA-directed RNA polymerase subunit beta (1070 aa).

This sequence belongs to the RNA polymerase beta chain family. In plastids the minimal PEP RNA polymerase catalytic core is composed of four subunits: alpha, beta, beta', and beta''. When a (nuclear-encoded) sigma factor is associated with the core the holoenzyme is formed, which can initiate transcription.

It localises to the plastid. The protein localises to the chloroplast. It carries out the reaction RNA(n) + a ribonucleoside 5'-triphosphate = RNA(n+1) + diphosphate. Functionally, DNA-dependent RNA polymerase catalyzes the transcription of DNA into RNA using the four ribonucleoside triphosphates as substrates. The chain is DNA-directed RNA polymerase subunit beta from Lotus japonicus (Lotus corniculatus var. japonicus).